Reading from the N-terminus, the 341-residue chain is Ketol-acid reductoisomerase (NADP(+)) (341 aa).

The region spanning 1 to 182 is the KARI N-terminal Rossmann domain; it reads MATIYYDKDA…GCTRAGVLET (182 aa). NADP(+) contacts are provided by residues 25 to 28, S51, S53, and 83 to 86; these read YGSQ and DQTQ. H108 is a catalytic residue. NADP(+) is bound at residue G134. One can recognise a KARI C-terminal knotted domain in the interval 183–328; sequence TFKEETETDL…KRLRDMMSWI (146 aa). Mg(2+)-binding residues include D191, E195, E227, and E231. S252 is a substrate binding site.

It belongs to the ketol-acid reductoisomerase family. Mg(2+) serves as cofactor.

The enzyme catalyses (2R)-2,3-dihydroxy-3-methylbutanoate + NADP(+) = (2S)-2-acetolactate + NADPH + H(+). It carries out the reaction (2R,3R)-2,3-dihydroxy-3-methylpentanoate + NADP(+) = (S)-2-ethyl-2-hydroxy-3-oxobutanoate + NADPH + H(+). Its pathway is amino-acid biosynthesis; L-isoleucine biosynthesis; L-isoleucine from 2-oxobutanoate: step 2/4. It participates in amino-acid biosynthesis; L-valine biosynthesis; L-valine from pyruvate: step 2/4. Involved in the biosynthesis of branched-chain amino acids (BCAA). Catalyzes an alkyl-migration followed by a ketol-acid reduction of (S)-2-acetolactate (S2AL) to yield (R)-2,3-dihydroxy-isovalerate. In the isomerase reaction, S2AL is rearranged via a Mg-dependent methyl migration to produce 3-hydroxy-3-methyl-2-ketobutyrate (HMKB). In the reductase reaction, this 2-ketoacid undergoes a metal-dependent reduction by NADPH to yield (R)-2,3-dihydroxy-isovalerate. The sequence is that of Ketol-acid reductoisomerase (NADP(+)) from Anaeromyxobacter sp. (strain K).